Here is a 250-residue protein sequence, read N- to C-terminus: Flap endonuclease Xni (250 aa).

D104 contributes to the Mg(2+) binding site. The region spanning 160 to 249 (VQPQQLTDFW…LQGNLQQLRL (90 aa)) is the 5'-3' exonuclease domain. Positions 171, 172, 180, 182, and 185 each coordinate K(+). Positions 184–189 (GIGPKS) are interaction with DNA.

This sequence belongs to the Xni family. It depends on Mg(2+) as a cofactor. The cofactor is K(+).

Its function is as follows. Has flap endonuclease activity. During DNA replication, flap endonucleases cleave the 5'-overhanging flap structure that is generated by displacement synthesis when DNA polymerase encounters the 5'-end of a downstream Okazaki fragment. This is Flap endonuclease Xni from Sodalis glossinidius (strain morsitans).